Reading from the N-terminus, the 428-residue chain is Glutamate-1-semialdehyde 2,1-aminomutase (428 aa).

N6-(pyridoxal phosphate)lysine is present on lysine 265.

Belongs to the class-III pyridoxal-phosphate-dependent aminotransferase family. HemL subfamily. Homodimer. Requires pyridoxal 5'-phosphate as cofactor.

The protein resides in the cytoplasm. It carries out the reaction (S)-4-amino-5-oxopentanoate = 5-aminolevulinate. It functions in the pathway porphyrin-containing compound metabolism; protoporphyrin-IX biosynthesis; 5-aminolevulinate from L-glutamyl-tRNA(Glu): step 2/2. This is Glutamate-1-semialdehyde 2,1-aminomutase from Vesicomyosocius okutanii subsp. Calyptogena okutanii (strain HA).